The sequence spans 245 residues: MAVGLCVQVLCSLGGWLSLYTSFCCLNKHRSCEWSCRLVTFTHGVLSIGLSAYIGFIDGPWPFTHPGSPNTPLQVHVLCLTLGYFIFDLGWCIYFQSEGPLMLAHHTLSILGIIMALALGESGTEVNAVLFGSEITNPLLQMRWFLRETGHYHSFTGDVVDFLFVALFTGVRIGVGAHLLFCEMVSPTPKWFVKVGGVAMYAVSWCFMVSIWRFAWKKSIKKYHAWRSRRNEERQLRHNGHLKTH.

Transmembrane regions (helical) follow at residues 1–21, 38–58, 75–95, 99–119, 162–182, and 191–211; these read MAVG…SLYT, LVTF…GFID, VHVL…CIYF, GPLM…ALAL, FLFV…LLFC, and WFVK…MVSI. The 176-residue stretch at 29–204 folds into the TLC domain; sequence HRSCEWSCRL…VGGVAMYAVS (176 aa).

It belongs to the TLCD5 family.

The protein resides in the membrane. This Mus musculus (Mouse) protein is TLC domain-containing protein 5 (Tlcd5).